Consider the following 72-residue polypeptide: uncharacterized protein (72 aa).

The signal sequence occupies residues 1–22; sequence MQSNFIFATLLVLLSLLTFTYA. The Extracellular segment spans residues 23–28; the sequence is SGSSSM. The chain crosses the membrane as a helical span at residues 29–49; that stretch reads TSSSMPMFGGAIVAAFAFAIF. Topologically, residues 50–72 are cytoplasmic; it reads SRLAQNFAPRAIFSLLPYHSVSC.

Its subcellular location is the membrane. This is an uncharacterized protein from Dictyostelium discoideum (Social amoeba).